We begin with the raw amino-acid sequence, 309 residues long: MDDQGCPRCKTTKYRNPSLKLMVNVCGHTLCESCVELLFVRGSGSCQECDTPLRKSNFKVQLFEDPTIDKEVEIRKKILKIYNKREEDFPSLREYNDFLEEIEEIVLNLTNNVDLDNTRRKIDMYQKENKDTIQRNKIKMTREQEELEEALEMEKHENEQRRLHLQKEEQFQQMMKRKNKQELLDQLETSHLPASILLAQHKGKSVQAEMQVEKPRSFKTDTFSTGIKKGHHIASVPVTKIEEALYQYQPIHIETYGPQVPHIEMLGRQGYLNHVRAAAPQDLAGGYVSSLACHRALQDAFSGLFWQTH.

Residues C6 to D50 form an RING-type zinc finger. Residues R142–R161 form the UIM domain.

In terms of assembly, associates with CDK7 and cyclin H.

Its subcellular location is the nucleus. Its function is as follows. Stabilizes the cyclin H-CDK7 complex to form a functional CDK-activating kinase (CAK) enzymatic complex. In Xenopus laevis (African clawed frog), this protein is CDK-activating kinase assembly factor MAT1 (mnat1).